The sequence spans 301 residues: Hydroxymycolate synthase MmaA4 (301 aa).

S-adenosyl-L-methionine-binding positions include 42 to 43 (YS), 81 to 83 (GCG), 103 to 108 (TLSKNQ), 132 to 133 (WE), and Ile-145. The active site involves Cys-278.

Belongs to the CFA/CMAS family. In terms of assembly, monomer.

It participates in lipid metabolism; mycolic acid biosynthesis. Its activity is regulated as follows. Inhibited by S-adenosyl-N-decyl-aminoethyl (SADAE). Functionally, involved in the biosynthesis of hydroxymycolate, a common precursor of oxygenated mycolic acids (methoxy-mycolate and keto-mycolate). Probably transfers a methyl group from the S-adenosylmethionine (SAM) cofactor and, subsequently or simultaneously, a water molecule onto the double bound of ethylene substrates, leading to the formation of the hydroxylated product at the distal position. Involved in the activation of the antitubercular drug thiacetazone (TAC). The protein is Hydroxymycolate synthase MmaA4 (mmaA4) of Mycobacterium tuberculosis (strain ATCC 25618 / H37Rv).